The chain runs to 261 residues: Imidazole glycerol phosphate synthase subunit HisF (261 aa).

Residues D11 and D130 contribute to the active site.

The protein belongs to the HisA/HisF family. As to quaternary structure, heterodimer of HisH and HisF.

It is found in the cytoplasm. The catalysed reaction is 5-[(5-phospho-1-deoxy-D-ribulos-1-ylimino)methylamino]-1-(5-phospho-beta-D-ribosyl)imidazole-4-carboxamide + L-glutamine = D-erythro-1-(imidazol-4-yl)glycerol 3-phosphate + 5-amino-1-(5-phospho-beta-D-ribosyl)imidazole-4-carboxamide + L-glutamate + H(+). The protein operates within amino-acid biosynthesis; L-histidine biosynthesis; L-histidine from 5-phospho-alpha-D-ribose 1-diphosphate: step 5/9. IGPS catalyzes the conversion of PRFAR and glutamine to IGP, AICAR and glutamate. The HisF subunit catalyzes the cyclization activity that produces IGP and AICAR from PRFAR using the ammonia provided by the HisH subunit. The chain is Imidazole glycerol phosphate synthase subunit HisF from Heliobacterium mobile (Heliobacillus mobilis).